The sequence spans 142 residues: Large ribosomal subunit protein uL13 (142 aa).

The protein belongs to the universal ribosomal protein uL13 family. As to quaternary structure, part of the 50S ribosomal subunit.

Its function is as follows. This protein is one of the early assembly proteins of the 50S ribosomal subunit, although it is not seen to bind rRNA by itself. It is important during the early stages of 50S assembly. This Vibrio parahaemolyticus serotype O3:K6 (strain RIMD 2210633) protein is Large ribosomal subunit protein uL13.